The chain runs to 150 residues: 3-dehydroquinate dehydratase (150 aa).

The active-site Proton acceptor is the tyrosine 26. 3 residues coordinate substrate: asparagine 77, histidine 83, and aspartate 90. The Proton donor role is filled by histidine 103. Substrate-binding positions include 104-105 and arginine 114; that span reads LS.

The protein belongs to the type-II 3-dehydroquinase family. In terms of assembly, homododecamer.

The enzyme catalyses 3-dehydroquinate = 3-dehydroshikimate + H2O. It functions in the pathway metabolic intermediate biosynthesis; chorismate biosynthesis; chorismate from D-erythrose 4-phosphate and phosphoenolpyruvate: step 3/7. Catalyzes a trans-dehydration via an enolate intermediate. This is 3-dehydroquinate dehydratase from Enterobacter sp. (strain 638).